A 265-amino-acid chain; its full sequence is Formyltransferase/hydrolase complex Fhc subunit C (265 aa).

This sequence belongs to the FwdC/FmdC family. As to quaternary structure, octaheteromer. Part of the formyltransferase/hydrolase complex fhc; composed of FhcA, FhcB, FhcC and FhcD.

It is found in the cytoplasm. The protein operates within one-carbon metabolism; formaldehyde degradation; formate from formaldehyde (H(4)MPT route): step 4/5. In terms of biological role, involved in the transformation of 5-formyl tetrahydromethanopterin (5-formyl-H(4)MPT) to methanofuran (MFR) and formate via the formylmethanofuran (formyl-MFR). The polypeptide is Formyltransferase/hydrolase complex Fhc subunit C (fhcC) (Methylorubrum extorquens (strain ATCC 14718 / DSM 1338 / JCM 2805 / NCIMB 9133 / AM1) (Methylobacterium extorquens)).